Reading from the N-terminus, the 149-residue chain is Ribonuclease pancreatic (149 aa).

The first 25 residues, 1-25, serve as a signal peptide directing secretion; that stretch reads MGLEKSFILFPLLILVLGWVQSSLG. Residues Lys32 and Arg35 each coordinate substrate. The active-site Proton acceptor is the His37. 4 disulfide bridges follow: Cys51/Cys109, Cys65/Cys120, Cys83/Cys135, and Cys90/Cys97. N-linked (GlcNAc...) asparagine glycosylation occurs at Asn59. 66 to 70 serves as a coordination point for substrate; the sequence is KPVNT. Asn87 carries N-linked (GlcNAc...) asparagine glycosylation. Lys91 and Arg110 together coordinate substrate. His144 functions as the Proton donor in the catalytic mechanism.

This sequence belongs to the pancreatic ribonuclease family. In terms of assembly, monomer. Interacts with and forms tight 1:1 complexes with RNH1. Dimerization of two such complexes may occur. Interaction with RNH1 inhibits this protein. In terms of tissue distribution, pancreas.

The protein localises to the secreted. It catalyses the reaction an [RNA] containing cytidine + H2O = an [RNA]-3'-cytidine-3'-phosphate + a 5'-hydroxy-ribonucleotide-3'-[RNA].. It carries out the reaction an [RNA] containing uridine + H2O = an [RNA]-3'-uridine-3'-phosphate + a 5'-hydroxy-ribonucleotide-3'-[RNA].. Its function is as follows. Endonuclease that catalyzes the cleavage of RNA on the 3' side of pyrimidine nucleotides. Acts on single-stranded and double-stranded RNA. The protein is Ribonuclease pancreatic (RNASE1) of Abrothrix jelskii (Jelski's altiplano mouse).